The primary structure comprises 557 residues: Dihydroxy-acid dehydratase (557 aa).

Aspartate 78 contributes to the Mg(2+) binding site. Cysteine 119 lines the [2Fe-2S] cluster pocket. 2 residues coordinate Mg(2+): aspartate 120 and lysine 121. Residue lysine 121 is modified to N6-carboxylysine. Cysteine 192 serves as a coordination point for [2Fe-2S] cluster. Residue glutamate 443 participates in Mg(2+) binding. Serine 469 acts as the Proton acceptor in catalysis.

Belongs to the IlvD/Edd family. Homodimer. The cofactor is [2Fe-2S] cluster. Requires Mg(2+) as cofactor.

It catalyses the reaction (2R)-2,3-dihydroxy-3-methylbutanoate = 3-methyl-2-oxobutanoate + H2O. The enzyme catalyses (2R,3R)-2,3-dihydroxy-3-methylpentanoate = (S)-3-methyl-2-oxopentanoate + H2O. It functions in the pathway amino-acid biosynthesis; L-isoleucine biosynthesis; L-isoleucine from 2-oxobutanoate: step 3/4. It participates in amino-acid biosynthesis; L-valine biosynthesis; L-valine from pyruvate: step 3/4. Functionally, functions in the biosynthesis of branched-chain amino acids. Catalyzes the dehydration of (2R,3R)-2,3-dihydroxy-3-methylpentanoate (2,3-dihydroxy-3-methylvalerate) into 2-oxo-3-methylpentanoate (2-oxo-3-methylvalerate) and of (2R)-2,3-dihydroxy-3-methylbutanoate (2,3-dihydroxyisovalerate) into 2-oxo-3-methylbutanoate (2-oxoisovalerate), the penultimate precursor to L-isoleucine and L-valine, respectively. The protein is Dihydroxy-acid dehydratase of Persephonella marina (strain DSM 14350 / EX-H1).